Here is a 177-residue protein sequence, read N- to C-terminus: Translation initiation factor IF-3 (177 aa).

The protein belongs to the IF-3 family. In terms of assembly, monomer.

The protein resides in the cytoplasm. Functionally, IF-3 binds to the 30S ribosomal subunit and shifts the equilibrium between 70S ribosomes and their 50S and 30S subunits in favor of the free subunits, thus enhancing the availability of 30S subunits on which protein synthesis initiation begins. The protein is Translation initiation factor IF-3 of Acaryochloris marina (strain MBIC 11017).